We begin with the raw amino-acid sequence, 88 residues long: Elongation factor 1-beta (88 aa).

The protein belongs to the EF-1-beta/EF-1-delta family.

Promotes the exchange of GDP for GTP in EF-1-alpha/GDP, thus allowing the regeneration of EF-1-alpha/GTP that could then be used to form the ternary complex EF-1-alpha/GTP/AAtRNA. This chain is Elongation factor 1-beta, found in Halorubrum lacusprofundi (strain ATCC 49239 / DSM 5036 / JCM 8891 / ACAM 34).